The primary structure comprises 290 residues: Protease HtpX homolog (290 aa).

2 consecutive transmembrane segments (helical) span residues 4–24 (IFLFIATNIAVIAVMSVVLSL) and 39–59 (PMLLVFSLVVGFTGSIISLLI). Histidine 144 lines the Zn(2+) pocket. Residue glutamate 145 is part of the active site. Histidine 148 serves as a coordination point for Zn(2+). 2 helical membrane passes run 159–179 (LVQGVVNTFVVFLSRVVGYFV) and 197–217 (ITVIVSQIVFGIAASVIVAWF). Glutamate 222 lines the Zn(2+) pocket.

This sequence belongs to the peptidase M48B family. Requires Zn(2+) as cofactor.

The protein resides in the cell inner membrane. This is Protease HtpX homolog from Janthinobacterium sp. (strain Marseille) (Minibacterium massiliensis).